The chain runs to 634 residues: Sodium-dependent neutral amino acid transporter B(0)AT1 (634 aa).

Topologically, residues 1-41 are cytoplasmic; that stretch reads MVRLVLPNPGLEERIPSLDELEVIEKEEAGSRPKWDNKAQY. The residue at position 17 (serine 17) is a Phosphoserine. Residues 42 to 62 traverse the membrane as a helical segment; that stretch reads MLTCVGFCVGLGNVWRFPYLC. Over 63-67 the chain is Extracellular; the sequence is QSHGG. A helical membrane pass occupies residues 68-88; the sequence is GAFMIPFLILLVFEGIPLLYL. The Cytoplasmic portion of the chain corresponds to 89-119; the sequence is EFAIGQRLRKGSMGVWSSIHPALKGIGIASM. Residues 120–140 traverse the membrane as a helical segment; it reads FVSFMVGLYYNTIIAWVMWYF. At 141–192 the chain is on the extracellular side; sequence FNSFQEPLPWSECPLNQNQTGYVEECAKSSSVDYFWYRETLNISTSISDSGS. N-linked (GlcNAc...) asparagine glycosylation is found at asparagine 158 and asparagine 182. A helical membrane pass occupies residues 193–213; sequence IQWWILLCLTCAWSVLYVCII. Residues 214 to 221 are Cytoplasmic-facing; it reads RGIETTGK. Residues 222 to 242 traverse the membrane as a helical segment; sequence AVYITSTLPYVVLTIFLIRGL. Residues 243–268 are Extracellular-facing; the sequence is TLKGATNGIVFLFTPNITELSNPNTW. Residue asparagine 258 is glycosylated (N-linked (GlcNAc...) asparagine). Residues 269-289 form a helical membrane-spanning segment; that stretch reads LDAGAQVFYSFSLAFGGLISF. The Cytoplasmic segment spans residues 290–304; it reads SSYNSVHNNCEMDSV. A helical transmembrane segment spans residues 305-325; sequence IVSVINGFTSVYAATVVYSII. The Extracellular segment spans residues 326–413; sequence GFRATERFDD…TEAITKMPVS (88 aa). N-linked (GlcNAc...) asparagine glycosylation is found at asparagine 354 and asparagine 368. A helical membrane pass occupies residues 414–434; that stretch reads PLWSVLFFIMLFCLGLSSMFG. Residues 435 to 456 lie on the Cytoplasmic side of the membrane; it reads NMEGVVVPLQDLNITPKKWPKE. The helical transmembrane segment at 457–477 threads the bilayer; that stretch reads LLTGLICLGTYLIAFIFTLNS. Residues 478-487 lie on the Extracellular side of the membrane; that stretch reads GQYWLSLLDS. Residues 488-508 form a helical membrane-spanning segment; sequence FAGSIPLLIIAFCEMFAVVYV. The Cytoplasmic segment spans residues 509-531; it reads YGVDRFNKDIEFMIGHKPNIFWQ. A helical transmembrane segment spans residues 532–552; it reads VTWRVVSPLIMLVIFLFFFVI. The Extracellular portion of the chain corresponds to 553 to 581; sequence EVNKTLMYSIWDPNYEEFPKSQKIPYPNW. Residue asparagine 555 is glycosylated (N-linked (GlcNAc...) asparagine). A helical membrane pass occupies residues 582-602; that stretch reads VYAVVVTVAGVPCLSIPCFAI. Over 603–634 the chain is Cytoplasmic; it reads YKFIRNCCQKSDDHHGLVNTLSTASVNGDLKN. Serine 627 carries the phosphoserine modification.

The protein belongs to the sodium:neurotransmitter symporter (SNF) (TC 2.A.22) family. SLC6A19 subfamily. In terms of assembly, interacts in a tissue-specific manner with ACE2 in small intestine and with CLTRN in the kidney. Interacts with CLTRN; this interaction is required for trafficking of SLC6A19 to the plasma membrane and for its catalytic activation in kidneys. Interacts with ACE2; this interaction is required for trafficking of SLC6A19 to the plasma membrane and for its catalytic activation in intestine. Interacts with ANPEP; the interaction positively regulates its amino acid transporter activity. Predominantly expressed in kidney and small intestine (at protein level). Expressed in the intestinal brush border (at protein level). Expression not observed in other organs, such as lung, skeletal muscle, brain, liver and pancreas. In kidney, expression is localized in the renal cortex but not in the medulla. Substantial amounts of expression in the proximal tubules. The distal nephron segments and the glomeruli are consistently negative. In the small intestine, expression is exclusively localized in villus enterocytes. High resolution of the hybridization-positive villi reveals a gradient of expression with the highest levels in apical cells. Not detected in crypt cells or in any other cell types of the small intestine.

The protein localises to the cell membrane. The catalysed reaction is L-alanine(in) + Na(+)(in) = L-alanine(out) + Na(+)(out). It catalyses the reaction L-cysteine(in) + Na(+)(in) = L-cysteine(out) + Na(+)(out). It carries out the reaction L-glutamine(in) + Na(+)(in) = L-glutamine(out) + Na(+)(out). The enzyme catalyses glycine(in) + Na(+)(in) = glycine(out) + Na(+)(out). The catalysed reaction is L-isoleucine(in) + Na(+)(in) = L-isoleucine(out) + Na(+)(out). It catalyses the reaction L-leucine(in) + Na(+)(in) = L-leucine(out) + Na(+)(out). It carries out the reaction L-methionine(in) + Na(+)(in) = L-methionine(out) + Na(+)(out). The enzyme catalyses L-phenylalanine(in) + Na(+)(in) = L-phenylalanine(out) + Na(+)(out). The catalysed reaction is L-serine(in) + Na(+)(in) = L-serine(out) + Na(+)(out). It catalyses the reaction L-tryptophan(in) + Na(+)(in) = L-tryptophan(out) + Na(+)(out). It carries out the reaction L-tyrosine(in) + Na(+)(in) = L-tyrosine(out) + Na(+)(out). The enzyme catalyses L-valine(in) + Na(+)(in) = L-valine(out) + Na(+)(out). Functionally, transporter that mediates resorption of neutral amino acids across the apical membrane of renal and intestinal epithelial cells. This uptake is sodium-dependent and chloride-independent. Requires CLTRN in kidney or ACE2 in intestine for cell surface expression and amino acid transporter activity. The chain is Sodium-dependent neutral amino acid transporter B(0)AT1 (Slc6a19) from Mus musculus (Mouse).